The primary structure comprises 265 residues: Putative N(omega)-hydroxy-L-arginine synthase DcsA (265 aa).

This sequence belongs to the DcsA family. Heme serves as cofactor.

Functionally, involved in the biosynthesis of the antibiotic D-cycloserine (DCS), a cyclic structural analog of D-alanine, used as an antitubercular agent. Could catalyze the production of N(omega)-hydroxy-L-arginine (NHA) from L-arginine. This Streptomyces lavendulae protein is Putative N(omega)-hydroxy-L-arginine synthase DcsA.